We begin with the raw amino-acid sequence, 848 residues long: Coiled-coil and C2 domain-containing protein 1B (848 aa).

A compositionally biased stretch (basic residues) spans 1–10; it reads MPGPRPRKGP. Disordered regions lie at residues 1-21 and 53-75; these read MPGP…ETAK and ALTG…PLPM. A coiled-coil region spans residues 165–193; that stretch reads LQALLEERIRNYREAAASAKEAGEAAKAR. Disordered stretches follow at residues 217–276, 326–353, 433–460, and 476–523; these read EDEI…DPDP, VDLS…ATQG, DFAE…QDSV, and ALVD…SPSV. Pro residues predominate over residues 438-448; it reads PVPPGFPPIPG. The residue at position 455 (Ser455) is a Phosphoserine. Residues 476–485 show a composition bias toward acidic residues; it reads ALVDDDEESD. Low complexity-rich tracts occupy residues 487–498 and 509–522; these read PAQAPLAKKPAQ and EPKA…LSPS. Position 583 is a phosphoserine (Ser583). Thr586 is subject to Phosphothreonine. Residues 600-626 adopt a coiled-coil conformation; that stretch reads LRLSQKAEEVYAQLQKMLQEQQAKCLL. The C2 domain occupies 666–805; sequence DPPSHHFELK…EKECEIREIM (140 aa).

The protein belongs to the CC2D1 family. Interacts with CHMP4B.

The protein localises to the nucleus. In terms of biological role, transcription factor that binds specifically to the DRE (dual repressor element) and represses HTR1A gene transcription in neuronal cells. The sequence is that of Coiled-coil and C2 domain-containing protein 1B (Cc2d1b) from Mus musculus (Mouse).